The chain runs to 495 residues: uncharacterized protein (495 aa).

Positions Ser-337–Lys-360 are disordered.

This is an uncharacterized protein from Caenorhabditis elegans.